Here is a 473-residue protein sequence, read N- to C-terminus: Cysteine--tRNA ligase (473 aa).

Cys33 serves as a coordination point for Zn(2+). A 'HIGH' region motif is present at residues 35 to 45 (ATVQGQPHIGH). Positions 211, 236, and 240 each coordinate Zn(2+). A 'KMSKS' region motif is present at residues 267–271 (KMSKS). An ATP-binding site is contributed by Lys270.

Belongs to the class-I aminoacyl-tRNA synthetase family. Monomer. Zn(2+) is required as a cofactor.

The protein resides in the cytoplasm. It catalyses the reaction tRNA(Cys) + L-cysteine + ATP = L-cysteinyl-tRNA(Cys) + AMP + diphosphate. The protein is Cysteine--tRNA ligase of Mycobacterium leprae (strain Br4923).